The chain runs to 35 residues: Dermonecrotic toxin LdSicTox-alpha-1 (35 aa).

Residue His-11 is part of the active site. Mg(2+)-binding residues include Glu-31 and Asp-33.

It belongs to the arthropod phospholipase D family. Class I subfamily. Requires Mg(2+) as cofactor. In terms of processing, contains 1 disulfide bond. Expressed by the venom gland.

The protein resides in the secreted. The enzyme catalyses an N-(acyl)-sphingosylphosphocholine = an N-(acyl)-sphingosyl-1,3-cyclic phosphate + choline. It carries out the reaction an N-(acyl)-sphingosylphosphoethanolamine = an N-(acyl)-sphingosyl-1,3-cyclic phosphate + ethanolamine. The catalysed reaction is a 1-acyl-sn-glycero-3-phosphocholine = a 1-acyl-sn-glycero-2,3-cyclic phosphate + choline. It catalyses the reaction a 1-acyl-sn-glycero-3-phosphoethanolamine = a 1-acyl-sn-glycero-2,3-cyclic phosphate + ethanolamine. In terms of biological role, dermonecrotic toxins cleave the phosphodiester linkage between the phosphate and headgroup of certain phospholipids (sphingolipid and lysolipid substrates), forming an alcohol (often choline) and a cyclic phosphate. This toxin acts on sphingomyelin (SM). It may also act on ceramide phosphoethanolamine (CPE), lysophosphatidylcholine (LPC) and lysophosphatidylethanolamine (LPE), but not on lysophosphatidylserine (LPS), and lysophosphatidylglycerol (LPG). It acts by transphosphatidylation, releasing exclusively cyclic phosphate products as second products. Induces dermonecrosis, hemolysis, increased vascular permeability, edema, inflammatory response, and platelet aggregation. The polypeptide is Dermonecrotic toxin LdSicTox-alpha-1 (Loxosceles deserta (Desert recluse spider)).